A 137-amino-acid polypeptide reads, in one-letter code: Small ribosomal subunit protein uS12 (137 aa).

Asp-89 carries the 3-methylthioaspartic acid modification. The segment at 101–137 (SLDTSGVADRKQSRSKYGAKQPKAGAPAAPVKGKGKK) is disordered. A compositionally biased stretch (low complexity) spans 116-137 (KYGAKQPKAGAPAAPVKGKGKK).

It belongs to the universal ribosomal protein uS12 family. Part of the 30S ribosomal subunit. Contacts proteins S8 and S17. May interact with IF1 in the 30S initiation complex.

With S4 and S5 plays an important role in translational accuracy. In terms of biological role, interacts with and stabilizes bases of the 16S rRNA that are involved in tRNA selection in the A site and with the mRNA backbone. Located at the interface of the 30S and 50S subunits, it traverses the body of the 30S subunit contacting proteins on the other side and probably holding the rRNA structure together. The combined cluster of proteins S8, S12 and S17 appears to hold together the shoulder and platform of the 30S subunit. The chain is Small ribosomal subunit protein uS12 from Chlorobium chlorochromatii (strain CaD3).